The chain runs to 540 residues: Glucose-6-phosphate isomerase (540 aa).

Glu-350 functions as the Proton donor in the catalytic mechanism. Catalysis depends on residues His-381 and Lys-503.

The protein belongs to the GPI family.

The protein resides in the cytoplasm. It carries out the reaction alpha-D-glucose 6-phosphate = beta-D-fructose 6-phosphate. It participates in carbohydrate biosynthesis; gluconeogenesis. The protein operates within carbohydrate degradation; glycolysis; D-glyceraldehyde 3-phosphate and glycerone phosphate from D-glucose: step 2/4. In terms of biological role, catalyzes the reversible isomerization of glucose-6-phosphate to fructose-6-phosphate. This is Glucose-6-phosphate isomerase from Burkholderia mallei (strain NCTC 10247).